The primary structure comprises 965 residues: UvrABC system protein A (965 aa).

32-39 (GLSGSGKS) provides a ligand contact to ATP. The C4-type zinc finger occupies 254-281 (CPVCDYSLPELEPRLFSFNAPMGACPAC). ABC transporter domains lie at 311–588 (WDRR…PRSL) and 608–937 (PNAT…HFLA). Residue 641 to 648 (GVSGSGKS) participates in ATP binding. Residues 740–766 (CEACEGDGLIKVEMHFLPDVYVPCDIC) form a C4-type zinc finger.

Belongs to the ABC transporter superfamily. UvrA family. In terms of assembly, forms a heterotetramer with UvrB during the search for lesions.

It is found in the cytoplasm. In terms of biological role, the UvrABC repair system catalyzes the recognition and processing of DNA lesions. UvrA is an ATPase and a DNA-binding protein. A damage recognition complex composed of 2 UvrA and 2 UvrB subunits scans DNA for abnormalities. When the presence of a lesion has been verified by UvrB, the UvrA molecules dissociate. This chain is UvrABC system protein A, found in Xylella fastidiosa (strain Temecula1 / ATCC 700964).